A 651-amino-acid chain; its full sequence is Chaperone protein HtpG (651 aa).

Positions 1–353 (MAAHVEQLEF…AQDMSLNVSR (353 aa)) are a; substrate-binding. Residues 354-569 (EILQQDRQIR…TFGITPALAR (216 aa)) are b. Positions 570-651 (MYRASGQPVP…RLTRTVGDQT (82 aa)) are c.

It belongs to the heat shock protein 90 family. In terms of assembly, homodimer.

The protein localises to the cytoplasm. Molecular chaperone. Has ATPase activity. The polypeptide is Chaperone protein HtpG (Mycolicibacterium vanbaalenii (strain DSM 7251 / JCM 13017 / BCRC 16820 / KCTC 9966 / NRRL B-24157 / PYR-1) (Mycobacterium vanbaalenii)).